Here is a 185-residue protein sequence, read N- to C-terminus: Protein PBP4 (185 aa).

Composition is skewed to low complexity over residues 1–24 (MTTTSTTSVDGRTSSTLKATLSAS) and 46–62 (AQAAAKALPRQQQQQQQ). 2 disordered regions span residues 1-116 (MTTT…YNRE) and 147-168 (ETASGRVSTATDWGTVSSSKNK). Composition is skewed to polar residues over residues 73-83 (PANTKTKTIAS), 91-102 (KGSSTANGSSTN), and 147-166 (ETASGRVSTATDWGTVSSSK).

Interacts with IGO1, LSM12 and PBP1.

The protein resides in the cytoplasm. It is found in the nucleus. The chain is Protein PBP4 (PBP4) from Saccharomyces cerevisiae (strain ATCC 204508 / S288c) (Baker's yeast).